We begin with the raw amino-acid sequence, 287 residues long: Melatonin receptor type 1B-A (287 aa).

The Extracellular portion of the chain corresponds to 1 to 28 (MPENVSLIRNRTEVGQGRAWGSGAGARP). Asn4 and Asn10 each carry an N-linked (GlcNAc...) asparagine glycan. A helical membrane pass occupies residues 29-49 (AWVVMVLAGVLIFTSVVDVLG). The Cytoplasmic segment spans residues 50-69 (NVLVIISVLRNRKLRNAGNA). The chain crosses the membrane as a helical span at residues 70 to 90 (FVVSLAFADLLVVCYPYPLVL). The Extracellular segment spans residues 91-107 (HAMLHAGWLPGEMECKV). Cysteines 105 and 182 form a disulfide. The chain crosses the membrane as a helical span at residues 108-128 (SGFLMGASVIGSIFNITAIAI). Residues 129–149 (NRYCFICQANTYEKIYGRAGT) lie on the Cytoplasmic side of the membrane. The chain crosses the membrane as a helical span at residues 150–170 (LVLLTLVWVLTAIAILPNLSL). The Extracellular portion of the chain corresponds to 171–192 (GSLTYDPRVYSCTFSQTTSAGY). The helical transmembrane segment at 193–213 (TIAVVTVHFLLPIAVVTFCYL) threads the bilayer. Topologically, residues 214–245 (RIWVLVLRVRRRVTTDVRPRLRPSELRHFLTM) are cytoplasmic. A helical transmembrane segment spans residues 246–266 (FVVFVLFAVCWAPLNLIGLAV). Residues 267–275 (AVDPPRVGP) are Extracellular-facing. The chain crosses the membrane as a helical span at residues 276–287 (LVPDWLFVMSYF).

The protein belongs to the G-protein coupled receptor 1 family.

The protein resides in the cell membrane. High affinity receptor for melatonin. The activity of this receptor is mediated by pertussis toxin sensitive G proteins that inhibits adenylate cyclase activity. The polypeptide is Melatonin receptor type 1B-A (mtnr1ba) (Danio rerio (Zebrafish)).